Reading from the N-terminus, the 230-residue chain is Thymidylate kinase (230 aa).

An ATP-binding site is contributed by 20–27 (GGEGAGKS).

It belongs to the thymidylate kinase family.

The catalysed reaction is dTMP + ATP = dTDP + ADP. Phosphorylation of dTMP to form dTDP in both de novo and salvage pathways of dTTP synthesis. The chain is Thymidylate kinase from Rhodopseudomonas palustris (strain TIE-1).